The following is a 156-amino-acid chain: MNMNATLLGQAIAFFFFVTFCMKYVWPPLMEAIEERQAKIADGLVAADRAAKDLNLAQANASEQLKEAKHAASELIEQANKRRAQIVDEAKAEAQAEREKILAQGLAEIESERNRARDELRKQVATLAVIGAEKILERSIDKDVHAELLNKVTAEL.

The chain crosses the membrane as a helical span at residues 7-29 (LLGQAIAFFFFVTFCMKYVWPPL).

The protein belongs to the ATPase B chain family. F-type ATPases have 2 components, F(1) - the catalytic core - and F(0) - the membrane proton channel. F(1) has five subunits: alpha(3), beta(3), gamma(1), delta(1), epsilon(1). F(0) has three main subunits: a(1), b(2) and c(10-14). The alpha and beta chains form an alternating ring which encloses part of the gamma chain. F(1) is attached to F(0) by a central stalk formed by the gamma and epsilon chains, while a peripheral stalk is formed by the delta and b chains.

It is found in the cell inner membrane. F(1)F(0) ATP synthase produces ATP from ADP in the presence of a proton or sodium gradient. F-type ATPases consist of two structural domains, F(1) containing the extramembraneous catalytic core and F(0) containing the membrane proton channel, linked together by a central stalk and a peripheral stalk. During catalysis, ATP synthesis in the catalytic domain of F(1) is coupled via a rotary mechanism of the central stalk subunits to proton translocation. Functionally, component of the F(0) channel, it forms part of the peripheral stalk, linking F(1) to F(0). The chain is ATP synthase subunit b from Photobacterium profundum (strain SS9).